Consider the following 401-residue polypeptide: Anhydro-N-acetylmuramic acid kinase (401 aa).

25–32 (GTSLDGLD) provides a ligand contact to ATP.

The protein belongs to the anhydro-N-acetylmuramic acid kinase family.

The catalysed reaction is 1,6-anhydro-N-acetyl-beta-muramate + ATP + H2O = N-acetyl-D-muramate 6-phosphate + ADP + H(+). The protein operates within amino-sugar metabolism; 1,6-anhydro-N-acetylmuramate degradation. It functions in the pathway cell wall biogenesis; peptidoglycan recycling. Functionally, catalyzes the specific phosphorylation of 1,6-anhydro-N-acetylmuramic acid (anhMurNAc) with the simultaneous cleavage of the 1,6-anhydro ring, generating MurNAc-6-P. Is required for the utilization of anhMurNAc either imported from the medium or derived from its own cell wall murein, and thus plays a role in cell wall recycling. The sequence is that of Anhydro-N-acetylmuramic acid kinase from Pseudoalteromonas translucida (strain TAC 125).